Here is a 158-residue protein sequence, read N- to C-terminus: UPF0329 protein ECU06_0050 (158 aa).

The protein belongs to the UPF0329 family.

The polypeptide is UPF0329 protein ECU06_0050 (Encephalitozoon cuniculi (strain GB-M1) (Microsporidian parasite)).